The sequence spans 102 residues: Urease subunit beta (102 aa).

This sequence belongs to the urease beta subunit family. As to quaternary structure, heterotrimer of UreA (gamma), UreB (beta) and UreC (alpha) subunits. Three heterotrimers associate to form the active enzyme.

The protein localises to the cytoplasm. The catalysed reaction is urea + 2 H2O + H(+) = hydrogencarbonate + 2 NH4(+). It participates in nitrogen metabolism; urea degradation; CO(2) and NH(3) from urea (urease route): step 1/1. The chain is Urease subunit beta from Acinetobacter baumannii (strain AB307-0294).